Consider the following 398-residue polypeptide: MSAASPASIIQELASAAKQYENNESGAREALIAQSRALIASLEVPSEFIQHTFWSQPALSAIVRLATDVNLFQYLKDAQEEGLSAEALASKTGMDVSLFARLARHLVAMNVITSRNGVFYGTALSNGLAAENYQQSIRFCHDVSRPSFGAFPSFFKGNGYKTPALGTTDGPFQSAHKVDISFPQWLVGNPPYLQYFNSYMSAYRAGKPNWCDNGFYPVADRLLNGFDASVSDVLLVDVGGGRGHDIATFGSQFSPLPGRLVLQDREQVINSIPADESRQFEATTHDIFTTQPVKNARAYYMHSVPHGFGDEDAVKIMANLVPALAKGYSRVLLNEIVVDEESPVMSATNMDLIMLAHMGAKERTEADWRSILTRAGLKVVNIYSYPGVAESLIEAELA.

(4E,8E)-10-(4,6-dihydroxy-7-methyl-3-oxo-1,3-dihydro-2-benzofuran-5-yl)-4,8-dimethyldeca-4,8-dienoate is bound at residue Ser-144. Ser-144 provides a ligand contact to 4-farnesyl-3,5-dihydroxy-6-methylphthalide. Residue Ser-144 coordinates 6-O-desmethylmycophenolate. Asn-197 is a binding site for S-adenosyl-L-homocysteine. (4E,8E)-10-(4,6-dihydroxy-7-methyl-3-oxo-1,3-dihydro-2-benzofuran-5-yl)-4,8-dimethyldeca-4,8-dienoate is bound at residue Tyr-199. 4-farnesyl-3,5-dihydroxy-6-methylphthalide is bound at residue Tyr-199. Residue Tyr-199 participates in 6-O-desmethylmycophenolate binding. S-adenosyl-L-homocysteine contacts are provided by Tyr-203, Asp-237, Gly-239, His-244, Asp-245, Asp-264, and Arg-265. Asp-264 contributes to the S-adenosyl-L-methionine binding site. (4E,8E)-10-(4,6-dihydroxy-7-methyl-3-oxo-1,3-dihydro-2-benzofuran-5-yl)-4,8-dimethyldeca-4,8-dienoate-binding residues include Arg-265 and Gln-267. Arg-265 lines the 6-O-desmethylmycophenolate pocket. The S-adenosyl-L-homocysteine site is built by Asp-286, Ile-287, and His-302. Ser-303 is a binding site for (4E,8E)-10-(4,6-dihydroxy-7-methyl-3-oxo-1,3-dihydro-2-benzofuran-5-yl)-4,8-dimethyldeca-4,8-dienoate. Ser-303 serves as a coordination point for 4-farnesyl-3,5-dihydroxy-6-methylphthalide. Residue Ser-303 participates in 6-O-desmethylmycophenolate binding. His-306 acts as the Proton acceptor in catalysis. Catalysis depends on residues Glu-335 and Glu-362.

It belongs to the class I-like SAM-binding methyltransferase superfamily. Cation-independent O-methyltransferase family. COMT subfamily. As to quaternary structure, homodimer.

Its subcellular location is the cytoplasm. The protein localises to the cytosol. It catalyses the reaction (4E,8E)-10-(4,6-dihydroxy-7-methyl-3-oxo-1,3-dihydro-2-benzofuran-5-yl)-4,8-dimethyldeca-4,8-dienoate + S-adenosyl-L-methionine = (4E,8E)-10-(4-hydroxy-6-methoxy-7-methyl-3-oxo-1,3-dihydro-2-benzofuran-5-yl)-4,8-dimethyldeca-4,8-dienoate + S-adenosyl-L-homocysteine + H(+). It carries out the reaction 4-farnesyl-3,5-dihydroxy-6-methylphthalide + S-adenosyl-L-methionine = 4-farnesyl-3,5-dihydroxy-6-methoxylphthalide + S-adenosyl-L-homocysteine + H(+). The enzyme catalyses 6-O-desmethylmycophenolate + S-adenosyl-L-methionine = mycophenolate + S-adenosyl-L-homocysteine + H(+). It participates in secondary metabolite biosynthesis; terpenoid biosynthesis. O-methyltransferase; part of the gene cluster that mediates the biosynthesis of mycophenolic acid (MPA), the first isolated antibiotic natural product in the world obtained from a culture of Penicillium brevicompactum in 1893. MpaG methylates farnesyl-DHMP-3C (FDHMP-3C) to yield MFDHMP-3C. The first step of the pathway is the synthesis of 5-methylorsellinic acid (5MOA) by the cytosolic polyketide synthase mpaC. 5MOA is then converted to the phthalide compound 5,7-dihydroxy-4,6-dimethylphthalide (DHMP) by the endoplasmic reticulum-bound cytochrome P450 monooxygenase mpaDE. MpaDE first catalyzes hydroxylation of 5-MOA to 4,6-dihydroxy-2-(hydroxymethyl)-3-methylbenzoic acid (DHMB). MpaDE then acts as a lactone synthase that catalyzes the ring closure to convert DHMB into DHMP. The next step is the prenylation of DHMP by the Golgi apparatus-associated prenyltransferase mpaA to yield farnesyl-DHMP (FDHMP). The ER-bound oxygenase mpaB then mediates the oxidative cleavage the C19-C20 double bond in FDHMP to yield FDHMP-3C via a mycophenolic aldehyde intermediate. The O-methyltransferase mpaG catalyzes the methylation of FDHMP-3C to yield MFDHMP-3C. MpaG and mpaB can also switch the order in which they act and, in this case, the conversion of FDHMP to MFDHMP-3C can take place via 5-O-methyl-FDHMP (MFDHMP). After the cytosolic methylation of FDHMP-3C, MFDHMP-3C enters into peroxisomes probably via free diffusion due to its low molecular weight. Upon a peroxisomal CoA ligation reaction, catalyzed by a beta-oxidation component enzyme acyl-CoA ligase ACL891, MFDHMP-3C-CoA would then be restricted to peroxisomes for the following beta-oxidation pathway steps. The peroxisomal beta-oxidation machinery than converts MFDHMP-3C-CoA into MPA_CoA, via a beta-oxidation chain-shortening process. Finally mpaH acts as a peroxisomal acyl-CoA hydrolase with high substrate specificity toward MPA-CoA to release the final product MPA. MpaH can also hydrolyze DMMPA-CoA to release demethylmycophenolic acid (DMMPA) that is further converted to MPA by mpaG. The polypeptide is O-methyltransferase mpaG (Penicillium brevicompactum).